Here is a 207-residue protein sequence, read N- to C-terminus: C-type lectin domain family 2 member D11 (207 aa).

Residues 1 to 44 lie on the Cytoplasmic side of the membrane; that stretch reads MSAKKASQPMLNTTGSLQEGEMGKMFHGKCLRIVSPESPAKLYC. Residues Ser-7 and Ser-16 each carry the phosphoserine modification. Residues 45-65 form a helical; Signal-anchor for type II membrane protein membrane-spanning segment; it reads CYGVIMVLSVAVVALSVALSV. The Extracellular segment spans residues 66–207; sequence KMTPQISTIN…LQCKTPFSPM (142 aa). The C-type lectin domain maps to 87–198; it reads VGNKCFYFSE…SCSKLNSYSL (112 aa). Residue Asn-100 is glycosylated (N-linked (GlcNAc...) asparagine).

Its subcellular location is the cell membrane. In terms of biological role, receptor for KLRB1B that protects target cells against natural killer cell-mediated lysis. In Rattus norvegicus (Rat), this protein is C-type lectin domain family 2 member D11 (Clec2d11).